The primary structure comprises 225 residues: Transcriptional activator protein CUP2 (225 aa).

A DNA-binding region (copper-fist) is located at residues 1-40; sequence MVVINGVKYACETCIRGHRAAQCTHTDGPLQMIRRKGRPS. Residues 1-108 form a binds copper and DNA region; that stretch reads MVVINGVKYA…KSKGGSCHRR (108 aa). Zn(2+) contacts are provided by Cys11, Cys14, Cys23, and His25. The segment at 109–225 is required for transcriptional activation; it reads ANDEAAHVNG…QVSSHNSHSQ (117 aa).

It localises to the nucleus. Functionally, trans-acting regulatory protein that activates transcription of the CUP1 gene (metallothionein) in response to copper ions. Binds to the CUP1 UAS sequence 5'-GCTTCTTTTCCGCTGA-3'. Binds DNA only in presence of copper or silver. Copper seems to alter the conformation of the protein. This chain is Transcriptional activator protein CUP2 (CUP2), found in Saccharomyces cerevisiae (strain ATCC 204508 / S288c) (Baker's yeast).